A 488-amino-acid chain; its full sequence is uncharacterized protein (488 aa).

12 helical membrane passes run 2 to 22, 27 to 47, 59 to 79, 106 to 126, 176 to 196, 241 to 261, 275 to 295, 314 to 334, 347 to 367, 368 to 388, 438 to 458, and 461 to 481; these read FGLP…VFLV, VHAF…GGMS, FGGT…MGSV, LAIT…FVIL, IGAM…GIVL, LLPI…HLFV, IVSF…ISVY, VKTA…GAVL, IANL…LVRF, IQGS…PILA, VPTT…NLIF, and DGSV…LFYI.

Belongs to the GntP permease family.

It is found in the cell inner membrane. This is an uncharacterized protein from Haemophilus influenzae (strain ATCC 51907 / DSM 11121 / KW20 / Rd).